Here is a 1316-residue protein sequence, read N- to C-terminus: DNA-directed RNA polymerase subunit beta' (1316 aa).

The Zn(2+) site is built by C60, C62, C75, and C78. The Mg(2+) site is built by D535, D537, and D539. Residues C891, C968, C975, and C978 each coordinate Zn(2+).

This sequence belongs to the RNA polymerase beta' chain family. The RNAP catalytic core consists of 2 alpha, 1 beta, 1 beta' and 1 omega subunit. When a sigma factor is associated with the core the holoenzyme is formed, which can initiate transcription. Mg(2+) serves as cofactor. Zn(2+) is required as a cofactor.

It catalyses the reaction RNA(n) + a ribonucleoside 5'-triphosphate = RNA(n+1) + diphosphate. In terms of biological role, DNA-dependent RNA polymerase catalyzes the transcription of DNA into RNA using the four ribonucleoside triphosphates as substrates. In Mycobacterium ulcerans (strain Agy99), this protein is DNA-directed RNA polymerase subunit beta'.